The following is a 232-amino-acid chain: MSNVDHAEIAKFEALAHRWWDRESEFKPLHEINPLRVNWIEEHVRLAGKKVLDVGCGGGILSEAMALRGAAVTAIDMGEAPLAVARLHQLESGVEVDYRQSTVEALAAEMPGRFDVVTCLEMLEHVPDPASVIHACHTLVKPGGQVFFSTINRNPKAYLLAIIGAEYLLKLLPRGTHDFRKFIRPSELGAWCRASGLAIGDIVGLTYNPLTRHYKLGTDVDVNYMIQTWREE.

S-adenosyl-L-methionine-binding residues include arginine 36, glycine 55, aspartate 76, and leucine 120.

The protein belongs to the methyltransferase superfamily. UbiG/COQ3 family.

It catalyses the reaction a 3-demethylubiquinol + S-adenosyl-L-methionine = a ubiquinol + S-adenosyl-L-homocysteine + H(+). The enzyme catalyses a 3-(all-trans-polyprenyl)benzene-1,2-diol + S-adenosyl-L-methionine = a 2-methoxy-6-(all-trans-polyprenyl)phenol + S-adenosyl-L-homocysteine + H(+). Its pathway is cofactor biosynthesis; ubiquinone biosynthesis. In terms of biological role, O-methyltransferase that catalyzes the 2 O-methylation steps in the ubiquinone biosynthetic pathway. The polypeptide is Ubiquinone biosynthesis O-methyltransferase (Azotobacter vinelandii (strain DJ / ATCC BAA-1303)).